Reading from the N-terminus, the 431-residue chain is Adenylosuccinate synthetase (431 aa).

GTP contacts are provided by residues Gly-12–Lys-18 and Gly-40–Thr-42. Asp-13 functions as the Proton acceptor in the catalytic mechanism. Mg(2+) contacts are provided by Asp-13 and Gly-40. IMP-binding positions include Asp-13 to Lys-16, Asn-38 to His-41, Thr-130, Arg-144, Gln-225, Thr-240, and Arg-304. Catalysis depends on His-41, which acts as the Proton donor. Ala-300–Arg-306 provides a ligand contact to substrate. GTP contacts are provided by residues Arg-306, Lys-332–Asp-334, and Ser-414–Gly-416.

This sequence belongs to the adenylosuccinate synthetase family. In terms of assembly, homodimer. The cofactor is Mg(2+).

It localises to the cytoplasm. The catalysed reaction is IMP + L-aspartate + GTP = N(6)-(1,2-dicarboxyethyl)-AMP + GDP + phosphate + 2 H(+). It participates in purine metabolism; AMP biosynthesis via de novo pathway; AMP from IMP: step 1/2. Plays an important role in the de novo pathway of purine nucleotide biosynthesis. Catalyzes the first committed step in the biosynthesis of AMP from IMP. This chain is Adenylosuccinate synthetase, found in Anaeromyxobacter sp. (strain Fw109-5).